The primary structure comprises 237 residues: Ribosomal RNA small subunit methyltransferase G (237 aa).

S-adenosyl-L-methionine is bound by residues G78, F83, 129–130 (AE), and R148. The interval 216–237 (SKKKETPNKYPRKAGTPNKKPL) is disordered.

The protein belongs to the methyltransferase superfamily. RNA methyltransferase RsmG family.

The protein resides in the cytoplasm. Functionally, specifically methylates the N7 position of a guanine in 16S rRNA. This Streptococcus agalactiae serotype Ia (strain ATCC 27591 / A909 / CDC SS700) protein is Ribosomal RNA small subunit methyltransferase G.